The following is a 571-amino-acid chain: Probable serine/threonine-protein kinase WNK4 (571 aa).

One can recognise a Protein kinase domain in the interval 19 to 277; sequence GRFAEILGRG…AKELLQDPFL (259 aa). ATP contacts are provided by residues 99 to 102 and K149; that span reads TELF. The active-site Proton acceptor is the D166. The interval 396-425 is disordered; that stretch reads EDDETPHDHHRHRTDSFHSSSSHASSSQAS. Residues 412–425 are compositionally biased toward low complexity; it reads FHSSSSHASSSQAS. The residue at position 522 (S522) is a Phosphoserine.

The protein belongs to the protein kinase superfamily. Ser/Thr protein kinase family. WNK subfamily.

It carries out the reaction L-seryl-[protein] + ATP = O-phospho-L-seryl-[protein] + ADP + H(+). The catalysed reaction is L-threonyl-[protein] + ATP = O-phospho-L-threonyl-[protein] + ADP + H(+). In terms of biological role, may regulate flowering time by modulating the photoperiod pathway. The polypeptide is Probable serine/threonine-protein kinase WNK4 (WNK4) (Arabidopsis thaliana (Mouse-ear cress)).